The chain runs to 76 residues: Kappa-actitoxin-Avd4c (76 aa).

The first 19 residues, 1–19 (MNKALFLCLVVLCAAVVFA), serve as a signal peptide directing secretion. The propeptide occupies 20–31 (AEDLQKAKHAPF). 3 disulfides stabilise this stretch: Cys37–Cys72, Cys39–Cys65, and Cys55–Cys73.

It belongs to the sea anemone type 3 (BDS) potassium channel toxin family. As to expression, moderately expressed in the ectodermal tissue from the distal and proximal tentacles, body wall, and oral disk.

Its subcellular location is the secreted. It localises to the nematocyst. Its function is as follows. Blocks Kv3 voltage-gated potassium channels. Reduces blood pressure. The protein is Kappa-actitoxin-Avd4c of Anemonia viridis (Snakelocks anemone).